Consider the following 332-residue polypeptide: Ferredoxin--NADP reductase (332 aa).

Positions 33, 41, 46, 86, 120, 286, and 327 each coordinate FAD.

It belongs to the ferredoxin--NADP reductase type 2 family. Homodimer. It depends on FAD as a cofactor.

It carries out the reaction 2 reduced [2Fe-2S]-[ferredoxin] + NADP(+) + H(+) = 2 oxidized [2Fe-2S]-[ferredoxin] + NADPH. The protein is Ferredoxin--NADP reductase of Rickettsia bellii (strain OSU 85-389).